A 619-amino-acid polypeptide reads, in one-letter code: Chaperone protein HscA homolog (619 aa).

It belongs to the heat shock protein 70 family.

In terms of biological role, chaperone involved in the maturation of iron-sulfur cluster-containing proteins. Has a low intrinsic ATPase activity which is markedly stimulated by HscB. The polypeptide is Chaperone protein HscA homolog (Shewanella frigidimarina (strain NCIMB 400)).